Reading from the N-terminus, the 600-residue chain is Aspartate--tRNA(Asp/Asn) ligase (600 aa).

Glu-176 is a binding site for L-aspartate. The segment at 200–203 (QQFK) is aspartate. Positions 222 and 452 each coordinate L-aspartate. 222 to 224 (RDE) contacts ATP. Glu-490 is a binding site for ATP. Arg-497 lines the L-aspartate pocket. 542–545 (GIDR) contributes to the ATP binding site.

It belongs to the class-II aminoacyl-tRNA synthetase family. Type 1 subfamily. In terms of assembly, homodimer.

The protein resides in the cytoplasm. The enzyme catalyses tRNA(Asx) + L-aspartate + ATP = L-aspartyl-tRNA(Asx) + AMP + diphosphate. Its function is as follows. Aspartyl-tRNA synthetase with relaxed tRNA specificity since it is able to aspartylate not only its cognate tRNA(Asp) but also tRNA(Asn). Reaction proceeds in two steps: L-aspartate is first activated by ATP to form Asp-AMP and then transferred to the acceptor end of tRNA(Asp/Asn). This is Aspartate--tRNA(Asp/Asn) ligase from Rickettsia felis (strain ATCC VR-1525 / URRWXCal2) (Rickettsia azadi).